Consider the following 481-residue polypeptide: Aspartyl/glutamyl-tRNA(Asn/Gln) amidotransferase subunit B (481 aa).

This sequence belongs to the GatB/GatE family. GatB subfamily. As to quaternary structure, heterotrimer of A, B and C subunits.

The enzyme catalyses L-glutamyl-tRNA(Gln) + L-glutamine + ATP + H2O = L-glutaminyl-tRNA(Gln) + L-glutamate + ADP + phosphate + H(+). It catalyses the reaction L-aspartyl-tRNA(Asn) + L-glutamine + ATP + H2O = L-asparaginyl-tRNA(Asn) + L-glutamate + ADP + phosphate + 2 H(+). Allows the formation of correctly charged Asn-tRNA(Asn) or Gln-tRNA(Gln) through the transamidation of misacylated Asp-tRNA(Asn) or Glu-tRNA(Gln) in organisms which lack either or both of asparaginyl-tRNA or glutaminyl-tRNA synthetases. The reaction takes place in the presence of glutamine and ATP through an activated phospho-Asp-tRNA(Asn) or phospho-Glu-tRNA(Gln). The sequence is that of Aspartyl/glutamyl-tRNA(Asn/Gln) amidotransferase subunit B from Pseudomonas entomophila (strain L48).